The chain runs to 394 residues: MAPAMEEIRQAQRAEGPAAVLAIGTSTPPNALYQADYPDYYFRITKSEHLTELKEKFKRMCDKSMIKKRYMYLTEEILKENPNICAFMAPSLDARQDIVVTEVPKLAKEAAARAIKEWGHPKSRITHLIFCTTSGIDMPGADYQLTRLLGLRPSVNRFMLYQQGCFAGGTVLRLAKDLAENNAGARVLVVCSEITAVTFRGPSESHLDSLVGQALFGDGAAAIIVGSDPDSATERPLFQLVSASQTILPESEGAIDGHLREIGLTFHLLKDVPGLISKNIQKCLLDAFKPLGVHDWNSIFWIAHPGGPAILDQVEIKLGLKAEKLAASRNVLAEYGNMSSACVLFILDEMRRRSAEAGQATTGEGLEWGVLFGFGPGLTVETIVLRSVPIAGAE.

Residue Cys165 is part of the active site.

It belongs to the thiolase-like superfamily. Chalcone/stilbene synthases family.

The enzyme catalyses (E)-4-coumaroyl-CoA + 3 malonyl-CoA + 3 H(+) = 2',4,4',6'-tetrahydroxychalcone + 3 CO2 + 4 CoA. The protein operates within secondary metabolite biosynthesis; flavonoid biosynthesis. The primary product of this enzyme is 4,2',4',6'-tetrahydroxychalcone (also termed naringenin-chalcone or chalcone) which can under specific conditions spontaneously isomerize into naringenin. The sequence is that of Chalcone synthase 8 (CHS8) from Bromheadia finlaysoniana (Orchid).